Here is a 180-residue protein sequence, read N- to C-terminus: MTQRLKTVYYETIVPKLKEQFNYTNIHQVPKVIKVTVNRGLGDASQNAKALESSIAELATITGQKPVVTRARKAIAGFKIRKGMPVGVMVTLRSERMYAFLDRLISLALPRIRDFRGISGNSFDGRGNYSLGIREQLIFPEIDYDKIDQIRGMDISIITTAQTDEEGRALLTEMGMPFRK.

This sequence belongs to the universal ribosomal protein uL5 family. In terms of assembly, part of the 50S ribosomal subunit; part of the 5S rRNA/L5/L18/L25 subcomplex. Contacts the 5S rRNA and the P site tRNA. Forms a bridge to the 30S subunit in the 70S ribosome.

Its function is as follows. This is one of the proteins that bind and probably mediate the attachment of the 5S RNA into the large ribosomal subunit, where it forms part of the central protuberance. In the 70S ribosome it contacts protein S13 of the 30S subunit (bridge B1b), connecting the 2 subunits; this bridge is implicated in subunit movement. Contacts the P site tRNA; the 5S rRNA and some of its associated proteins might help stabilize positioning of ribosome-bound tRNAs. This is Large ribosomal subunit protein uL5 from Gloeothece citriformis (strain PCC 7424) (Cyanothece sp. (strain PCC 7424)).